The chain runs to 1208 residues: MKSLAGHVVKYGKHRERKSFARISEVLELPNLIEIQTDSYQWFLDEGLREMFEDILPIDDFNGNLSLEFVDYELKEPKYTVAEARAHDANYSAPLHVTLRLTNRETGEIKAQEVFFGDFPLMTEQGTFIINGAERVIVSQLVRSPGVYFHGKVDKNGKEGFGSTVIPNRGAWLEMETDAKDISYVRIDRTRKIPLTVLVRALGFGSDDTIFEIFGDSETLRNTVEKDLHKNASDSRTEEGLKDVYERLRPGEPKTADSSRNLLNARFFDPKRYDLANVGRYKVNKKLDLKTRLLNLTLAETLVDPETGEIIVEKGTVLTHQVMETLAPFIDNGLNSVTYYPSEDGVVTDPMTVQVIKVFSPKDPEREVNVIGNGYPESAVKTVRPADIIASMSYFLNLMEGIGNVDDIDHLGNRRIRSVGELLQNQFRIGLARMERVVRERMSIQDTETLTPQQLINIRPVVASIKEFFGSSQLSQFMDQTNPLGELTHKRRLSALGPGGLTRDRAGYEVRDVHYSHYGRMCPIETPEGPNIGLINSLSSYAKVNKFGFIETPYRRVDRETGRVTDQIDYLTADIEDHYIVAQANSPLNEDGTFAQDVVMARAQSENLEVSIDKVDYMDVSPKQVVAVATACIPFLENDDSNRALMGANMQRQAVPLINPQAPWVGTGMEYKSAHDSGAALLCKHDGVVEFVDASEIRVRRDNGALDKYAVTKFRRSNSGTSYNQRPIVHLGEKVEKGDTLADGPSMEQGEMALGQNVLVGFMTWEGYNYEDAIIMSRRLVKDDVYTSIHIEEYESEARDTKLGPEEITREIPNVGEDALKDLDEMGIIRIGAEVQDGDLLVGKVTPKGVTELSAEERLLHAIFGEKAREVRDTSLRVPHGGGGIVHDVKIFTREAGDELSPGVNMLVRVYIVQKRKIHEGDKMAGRHGNKGVVSRIMPEEDMPFLPDGTPIDIMLNPLGVPSRMNIGQVLELHLGMAARQLGIHVATPVFDGASDEDVWETVREAGMASDAKTILYDGRTGEPFDGRVSVGVMYMIKLAHMVDDKLHARSIGPYSLVTQQPLGGKAQFGGQRFGEMEVWALEAYGAAYTLQEILTYKSDDVVGRVKTYEAIVKGEPIPKPGVPESFRVLVKELQSLGLDMRVLDIKDSEIELRDMDDEDDDLITVDALTKFAEQQTAKELEKKAAEQVEDERQDIIQNFETAEDNLD.

Belongs to the RNA polymerase beta chain family. As to quaternary structure, the RNAP catalytic core consists of 2 alpha, 1 beta, 1 beta' and 1 omega subunit. When a sigma factor is associated with the core the holoenzyme is formed, which can initiate transcription.

It carries out the reaction RNA(n) + a ribonucleoside 5'-triphosphate = RNA(n+1) + diphosphate. Its function is as follows. DNA-dependent RNA polymerase catalyzes the transcription of DNA into RNA using the four ribonucleoside triphosphates as substrates. This Enterococcus faecium (Streptococcus faecium) protein is DNA-directed RNA polymerase subunit beta.